The sequence spans 458 residues: Phosphoglucosamine mutase (458 aa).

The Phosphoserine intermediate role is filled by Ser-106. Ser-106, Asp-247, Asp-249, and Asp-251 together coordinate Mg(2+). The residue at position 106 (Ser-106) is a Phosphoserine.

This sequence belongs to the phosphohexose mutase family. Requires Mg(2+) as cofactor. Activated by phosphorylation.

The catalysed reaction is alpha-D-glucosamine 1-phosphate = D-glucosamine 6-phosphate. In terms of biological role, catalyzes the conversion of glucosamine-6-phosphate to glucosamine-1-phosphate. In Chlamydia felis (strain Fe/C-56) (Chlamydophila felis), this protein is Phosphoglucosamine mutase.